The primary structure comprises 194 residues: Molybdenum cofactor guanylyltransferase (194 aa).

GTP contacts are provided by residues 12–14 (LAG), Lys25, Asn53, Asp70, and Asp100. Mg(2+) is bound at residue Asp100.

It belongs to the MobA family. Monomer. Mg(2+) serves as cofactor.

The protein resides in the cytoplasm. The catalysed reaction is Mo-molybdopterin + GTP + H(+) = Mo-molybdopterin guanine dinucleotide + diphosphate. Its function is as follows. Transfers a GMP moiety from GTP to Mo-molybdopterin (Mo-MPT) cofactor (Moco or molybdenum cofactor) to form Mo-molybdopterin guanine dinucleotide (Mo-MGD) cofactor. The protein is Molybdenum cofactor guanylyltransferase of Aliivibrio fischeri (strain MJ11) (Vibrio fischeri).